The following is a 536-amino-acid chain: REST corepressor 2 (536 aa).

The interval 1 to 44 is disordered; sequence MERSGSGVLSRSRAKTVTNGNSQHSEEESSDEEHPNDSMIRVGG. A compositionally biased stretch (basic and acidic residues) spans 24–36; sequence HSEEESSDEEHPN. The ELM2 domain maps to 38-123; it reads SMIRVGGDYQ…KSLADLANFT (86 aa). The 52-residue stretch at 124 to 175 folds into the SANT 1 domain; the sequence is PFPDEWTVEDKVLFEQAFSFHGKSFHRIQQMLPDKMITSLVKYYYSWKKTRT. Residues 179–264 form a disordered region; it reads VMDRQARKLL…RARRRPPKGM (86 aa). The segment covering 197–211 has biased composition (acidic residues); that stretch reads NDEIEEGDPGSDSDF. The segment covering 249–262 has biased composition (basic residues); that stretch reads YRHHPLRARRRPPK. The stretch at 283–315 forms a coiled coil; sequence VTIRQLDTQLVSLKRQVQKIKQTNSVLRNNLGD. The SANT 2 domain occupies 328-379; it reads KINSRWTTEEQLLAVQAVRRYGKDFAAIADVIGNKTVAQVSSFFVSYRRRFN. The interval 389–536 is disordered; the sequence is AEQEVQGSSG…GLKVESPQSH (148 aa). The span at 391–406 shows a compositional bias: polar residues; the sequence is QEVQGSSGRTVNTELN. Low complexity predominate over residues 422-449; sequence SPPHSDSPLPSSEGSASGNHSSAQSSPP. Residues 450-476 show a composition bias toward pro residues; it reads LTQPPPLLRPAPPSAPPSLLRQPPPLQ.

It belongs to the CoREST family.

It localises to the nucleus. Functionally, may act as a component of a corepressor complex that represses transcription. This chain is REST corepressor 2 (rcor2), found in Danio rerio (Zebrafish).